The sequence spans 209 residues: Urease accessory protein UreG (209 aa).

Gly-18–Thr-25 is a binding site for GTP.

It belongs to the SIMIBI class G3E GTPase family. UreG subfamily. Homodimer. UreD, UreF and UreG form a complex that acts as a GTP-hydrolysis-dependent molecular chaperone, activating the urease apoprotein by helping to assemble the nickel containing metallocenter of UreC. The UreE protein probably delivers the nickel.

Its subcellular location is the cytoplasm. In terms of biological role, facilitates the functional incorporation of the urease nickel metallocenter. This process requires GTP hydrolysis, probably effectuated by UreG. The sequence is that of Urease accessory protein UreG from Cupriavidus pinatubonensis (strain JMP 134 / LMG 1197) (Cupriavidus necator (strain JMP 134)).